The chain runs to 52 residues: U-scutigerotoxin(01)-Tl1a (52 aa).

A signal peptide spans 1–25; it reads MLAKAMSLLMMFLLVLVIGSVMVSA.

This sequence belongs to the scutigerotoxin-01 family. Post-translationally, contains 1 disulfide bond. Expressed by the venom gland.

The protein localises to the secreted. This Thereuopoda longicornis (Long-legged centipede) protein is U-scutigerotoxin(01)-Tl1a.